The following is a 37-amino-acid chain: Fructose-bisphosphate aldolase A (37 aa).

The protein belongs to the class I fructose-bisphosphate aldolase family. As to quaternary structure, tetramer.

The catalysed reaction is beta-D-fructose 1,6-bisphosphate = D-glyceraldehyde 3-phosphate + dihydroxyacetone phosphate. It participates in carbohydrate degradation; glycolysis; D-glyceraldehyde 3-phosphate and glycerone phosphate from D-glucose: step 4/4. In terms of biological role, plays a key role in glycolysis and gluconeogenesis. This Thunnus albacares (Yellowfin tuna) protein is Fructose-bisphosphate aldolase A.